The chain runs to 347 residues: Secretory carrier-associated membrane protein 3 (347 aa).

The disordered stretch occupies residues 1 to 88 (MAQSRDGGNP…EPKNYGSYST (88 aa)). Residues 1 to 170 (MAQSRDGGNP…QKTVSTMYYL (170 aa)) are Cytoplasmic-facing. Residue S32 is modified to Phosphoserine. T37 is modified (phosphothreonine). Residues Y41 and Y53 each carry the phosphotyrosine modification. A compositionally biased stretch (pro residues) spans 49 to 66 (PPPAYEPPAPAPLPPPSA). A phosphoserine mark is found at S72 and S76. Phosphotyrosine is present on Y83. S85 bears the Phosphoserine mark. 4 helical membrane passes run 171 to 191 (WMCSTLALLLNFLACLASFCV), 197 to 217 (AGFGLSILWVLLFTPCSFVCW), 247 to 267 (FVLQAIGIPGWGFSGWISALV), and 277 to 297 (VLMLLVALLFTGIAVLGIVML). Over 298 to 347 (KRIHSLYRRTGASFQKAQQEFAAGVFSNPAVRTAAANAAAGAAENAFRAP) the chain is Cytoplasmic. K313 is covalently cross-linked (Glycyl lysine isopeptide (Lys-Gly) (interchain with G-Cter in SUMO1)).

Belongs to the SCAMP family. Interacts with NEDD4, NEDD4L and TSG101. Interacts with RNF126. Monoubiquitinated. In terms of tissue distribution, widely expressed, with highest expression in heart and skeletal muscle.

The protein resides in the membrane. Functions in post-Golgi recycling pathways. Acts as a recycling carrier to the cell surface. In Homo sapiens (Human), this protein is Secretory carrier-associated membrane protein 3 (SCAMP3).